Here is a 332-residue protein sequence, read N- to C-terminus: Protoheme IX farnesyltransferase (332 aa).

Helical transmembrane passes span 63–83, 109–129, 132–152, 160–180, 188–208, 245–265, and 286–306; these read LICT…LNCL, TVFL…ISGV, LAAG…TIIL, IVFG…AATG, WLFG…AILL, ILGV…LLPF, and AKGL…LLLI.

Belongs to the UbiA prenyltransferase family. Protoheme IX farnesyltransferase subfamily.

Its subcellular location is the cell inner membrane. It catalyses the reaction heme b + (2E,6E)-farnesyl diphosphate + H2O = Fe(II)-heme o + diphosphate. Its pathway is porphyrin-containing compound metabolism; heme O biosynthesis; heme O from protoheme: step 1/1. Converts heme B (protoheme IX) to heme O by substitution of the vinyl group on carbon 2 of heme B porphyrin ring with a hydroxyethyl farnesyl side group. This chain is Protoheme IX farnesyltransferase, found in Prochlorococcus marinus (strain MIT 9515).